A 63-amino-acid polypeptide reads, in one-letter code: ATP synthase F(0) complex subunit 8 (63 aa).

Residues 8 to 24 (TWLLTILSMLLTLFVLF) form a helical membrane-spanning segment. The residue at position 57 (lysine 57) is an N6-acetyllysine.

This sequence belongs to the ATPase protein 8 family. As to quaternary structure, component of the ATP synthase complex composed at least of ATP5F1A/subunit alpha, ATP5F1B/subunit beta, ATP5MC1/subunit c (homooctomer), MT-ATP6/subunit a, MT-ATP8/subunit 8, ATP5ME/subunit e, ATP5MF/subunit f, ATP5MG/subunit g, ATP5MK/subunit k, ATP5MJ/subunit j, ATP5F1C/subunit gamma, ATP5F1D/subunit delta, ATP5F1E/subunit epsilon, ATP5PF/subunit F6, ATP5PB/subunit b, ATP5PD/subunit d, ATP5PO/subunit OSCP. ATP synthase complex consists of a soluble F(1) head domain (subunits alpha(3) and beta(3)) - the catalytic core - and a membrane F(0) domain - the membrane proton channel (subunits c, a, 8, e, f, g, k and j). These two domains are linked by a central stalk (subunits gamma, delta, and epsilon) rotating inside the F1 region and a stationary peripheral stalk (subunits F6, b, d, and OSCP). Interacts with PRICKLE3.

The protein localises to the mitochondrion membrane. In terms of biological role, subunit 8, of the mitochondrial membrane ATP synthase complex (F(1)F(0) ATP synthase or Complex V) that produces ATP from ADP in the presence of a proton gradient across the membrane which is generated by electron transport complexes of the respiratory chain. ATP synthase complex consist of a soluble F(1) head domain - the catalytic core - and a membrane F(1) domain - the membrane proton channel. These two domains are linked by a central stalk rotating inside the F(1) region and a stationary peripheral stalk. During catalysis, ATP synthesis in the catalytic domain of F(1) is coupled via a rotary mechanism of the central stalk subunits to proton translocation. In vivo, can only synthesize ATP although its ATP hydrolase activity can be activated artificially in vitro. Part of the complex F(0) domain. The protein is ATP synthase F(0) complex subunit 8 of Balaenoptera musculus (Blue whale).